A 416-amino-acid chain; its full sequence is Tumor necrosis factor receptor superfamily member 19 (416 aa).

An N-terminal signal peptide occupies residues 1 to 29 (MALKVLPLHRTVLFAAILFLLHLACKVSC). Topologically, residues 30–170 (ETGDCRQQEF…TVSSPRDTAL (141 aa)) are extracellular. TNFR-Cys repeat units lie at residues 33-72 (DCRQ…DAQC) and 74-114 (PCRP…DAVC). Disulfide bonds link Cys-34–Cys-46, Cys-49–Cys-62, Cys-52–Cys-72, Cys-75–Cys-89, Cys-92–Cys-106, Cys-95–Cys-114, Cys-117–Cys-135, and Cys-138–Cys-149. A glycan (N-linked (GlcNAc...) asparagine) is linked at Asn-105. A TNFR-Cys 3; truncated repeat occupies 116 to 149 (DCLPGFYRKTKLVGFQDMECVPCGDPPPPYEPHC). Residues 171–191 (AAVICSALATVLLALLILCVI) form a helical membrane-spanning segment. The Cytoplasmic portion of the chain corresponds to 192 to 416 (YCKRQFMEKK…LAMPTAFQDA (225 aa)). The tract at residues 321-416 (LCDSYPELTG…LAMPTAFQDA (96 aa)) is disordered. Composition is skewed to polar residues over residues 331 to 351 (EDTN…SSGG), 360 to 370 (LESSGNVSEST), and 381 to 396 (VWEQ…TPSQ).

As to quaternary structure, associates with TRAF1, TRAF2, TRAF3 and TRAF5. Interacts with LINGO1. As to expression, highly expressed in adult brain, and in embryos from day 11-17, but not earlier. Detected in embryonic brain and epithelium, and at lower levels in adult heart, lung and liver. In neonatal mice, mainly in hair follicles and neuron-like cells in the cerebellum, but not in the skin epidermis. Isoform 3 was found in embryonic day 17.5 skin but not in brain and liver.

It localises to the cell membrane. The protein resides in the secreted. Can mediate activation of c-Jun and NF-kappa-B. May promote caspase-independent cell death. Isoform 2 and isoform 3 may act as decoy receptors. The chain is Tumor necrosis factor receptor superfamily member 19 (Tnfrsf19) from Mus musculus (Mouse).